Reading from the N-terminus, the 150-residue chain is Arginine repressor (150 aa).

It belongs to the ArgR family.

It is found in the cytoplasm. It participates in amino-acid biosynthesis; L-arginine biosynthesis [regulation]. Regulates arginine biosynthesis genes. This chain is Arginine repressor, found in Staphylococcus epidermidis (strain ATCC 35984 / DSM 28319 / BCRC 17069 / CCUG 31568 / BM 3577 / RP62A).